A 134-amino-acid chain; its full sequence is Ribonuclease VapC (134 aa).

A PINc domain is found at 4–124; sequence IVDTSIIIAL…NTKDFKRIPE (121 aa). Aspartate 6 is a Mg(2+) binding site.

Belongs to the PINc/VapC protein family. Requires Mg(2+) as cofactor.

Functionally, toxic component of a type II toxin-antitoxin (TA) system. Has ssRNase activity. Its RNase activity is partially neutralized by cognate antitoxin VapB. Rapidly induces apoptosis upon microinjection into mouse fibroblasts (L929 line). Probably contributes to host cell death if bacterial cell lysis occurs during host infection. This Rickettsia bellii (strain RML369-C) protein is Ribonuclease VapC.